We begin with the raw amino-acid sequence, 170 residues long: Chorion protein S18 (170 aa).

The first 17 residues, 1 to 17 (MMKFMCIFVCAIAAVSA), serve as a signal peptide directing secretion. A compositionally biased stretch (low complexity) spans 146 to 159 (AAAASSSVAGQHSG). The segment at 146 to 170 (AAAASSSVAGQHSGYKNSGYKNSSY) is disordered. The span at 160 to 170 (YKNSGYKNSSY) shows a compositional bias: polar residues.

The protein belongs to the chorion protein S15/S18 family.

The protein localises to the secreted. Functionally, chorion membrane (egg shell) protein; plays a role in protecting the egg from the environment. The polypeptide is Chorion protein S18 (Cp18) (Drosophila virilis (Fruit fly)).